The sequence spans 349 residues: Nicotinate-nucleotide--dimethylbenzimidazole phosphoribosyltransferase (349 aa).

The Proton acceptor role is filled by Glu-316.

Belongs to the CobT family.

It carries out the reaction 5,6-dimethylbenzimidazole + nicotinate beta-D-ribonucleotide = alpha-ribazole 5'-phosphate + nicotinate + H(+). The protein operates within nucleoside biosynthesis; alpha-ribazole biosynthesis; alpha-ribazole from 5,6-dimethylbenzimidazole: step 1/2. Functionally, catalyzes the synthesis of alpha-ribazole-5'-phosphate from nicotinate mononucleotide (NAMN) and 5,6-dimethylbenzimidazole (DMB). The protein is Nicotinate-nucleotide--dimethylbenzimidazole phosphoribosyltransferase of Photorhabdus laumondii subsp. laumondii (strain DSM 15139 / CIP 105565 / TT01) (Photorhabdus luminescens subsp. laumondii).